A 465-amino-acid polypeptide reads, in one-letter code: 2-halobenzoate 1,2-dioxygenase large subunit (465 aa).

A Rieske domain is found at 56–154; it reads WVFLAHESQV…GFNVDGSHDL (99 aa). C98, H100, C118, and H121 together coordinate [2Fe-2S] cluster. Fe cation is bound by residues H227 and H232.

This sequence belongs to the bacterial ring-hydroxylating dioxygenase alpha subunit family. As to quaternary structure, heterohexamer of 3 large (CbdA) subunits and 3 small (CbdB) subunits. The heterohexamer is part of 2-halobenzoate dioxygenase two component enzyme system. The other component is a NADH:acceptor reductase (CdbC). Requires [2Fe-2S] cluster as cofactor. Fe(2+) serves as cofactor.

It carries out the reaction a 2-halobenzoate + NADH + O2 + H(+) = a halide anion + catechol + CO2 + NAD(+). The protein operates within xenobiotic degradation; benzoate degradation via CoA ligation. In terms of biological role, component of 2-halobenzoate dioxygenase multicomponent enzyme system which catalyzes the incorporation of both atoms of molecular oxygen into 2-halobenzoate to form catechol. This is 2-halobenzoate 1,2-dioxygenase large subunit (cbdA) from Burkholderia cepacia (Pseudomonas cepacia).